A 423-amino-acid polypeptide reads, in one-letter code: Cop9 signalosome complex subunit 12 (423 aa).

One can recognise a PCI domain in the interval 232 to 418 (GFFHLNEALL…RCIVFSKKEP (187 aa)).

This sequence belongs to the CSN12 family. As to quaternary structure, component of a COP9 signalosome-like (CSN) complex, composed of RRI1/CSN5, CSN9, RRI2/CSN10, PCI8/CSN11, CSN12 and CSI1. In the complex, it probably interacts directly with RRI1/CSN5, CSN9, RRI2/CSN10 and CSI1. Interacts with SEM1 and THP3.

Its subcellular location is the cytoplasm. The protein resides in the nucleus. In terms of biological role, component of the COP9 signalosome (CSN) complex that acts as an regulator of the ubiquitin (Ubl) conjugation pathway by mediating the deneddylation of the cullin subunit of SCF-type E3 ubiquitin-protein ligase complexes. The CSN complex is involved in the regulation of the mating pheromone response. CSN12 forms a complex with THP3 that is recruited to transcribed genes and required for transcription elongation. The polypeptide is Cop9 signalosome complex subunit 12 (CSN12) (Saccharomyces cerevisiae (strain ATCC 204508 / S288c) (Baker's yeast)).